We begin with the raw amino-acid sequence, 563 residues long: Rhotekin (563 aa).

Residue arginine 14 is modified to Omega-N-methylarginine. The REM-1 domain occupies 17–98 (ALEMEFKRGR…LQRRKEAQVL (82 aa)). 2 positions are modified to phosphoserine: serine 30 and serine 106. Positions 96-116 (QVLGKTSRRPSDSGPPAERSP) are disordered. Arginine 230 is subject to Asymmetric dimethylarginine. Serine 232 carries the phosphoserine modification. In terms of domain architecture, PH spans 309–416 (QPTASGTLRV…WMEALWQLFF (108 aa)). Positions 518-563 (TFSLDAVPPDHSPRARSVAPLPPQRSPRTRGLCSKGQPRTWLQSPV) are disordered. Phosphoserine is present on residues serine 520, serine 529, and serine 543.

Interacts via its C-terminal region with the TAX1BP3 PDZ domain. This interaction facilitates Rho-mediated activation of the c-Fos serum response element (SRE). Interacts with SEPT9. Specifically binds to GTP-bound RHOA, RHOB and RHOC and inhibits their GTPase activity. Highly expressed in prostate, moderately in kidney, heart, brain, spleen, testis, placenta, small intestine, pancreas, skeletal muscle and peripheral blood leukocytes, and weakly in ovary, colon and thymus. Weakly expressed in all normal cell lines tested. Overexpressed in various cancer cell lines.

In terms of biological role, mediates Rho signaling to activate NF-kappa-B and may confer increased resistance to apoptosis to cells in gastric tumorigenesis. May play a novel role in the organization of septin structures. This is Rhotekin from Homo sapiens (Human).